Consider the following 346-residue polypeptide: tRNA N6-adenosine threonylcarbamoyltransferase (346 aa).

2 residues coordinate Fe cation: H110 and H114. Substrate contacts are provided by residues 132–136, D165, G178, and N274; that span reads LLSGG. D298 contributes to the Fe cation binding site.

It belongs to the KAE1 / TsaD family. It depends on Fe(2+) as a cofactor.

Its subcellular location is the cytoplasm. It catalyses the reaction L-threonylcarbamoyladenylate + adenosine(37) in tRNA = N(6)-L-threonylcarbamoyladenosine(37) in tRNA + AMP + H(+). Required for the formation of a threonylcarbamoyl group on adenosine at position 37 (t(6)A37) in tRNAs that read codons beginning with adenine. Is involved in the transfer of the threonylcarbamoyl moiety of threonylcarbamoyl-AMP (TC-AMP) to the N6 group of A37, together with TsaE and TsaB. TsaD likely plays a direct catalytic role in this reaction. The protein is tRNA N6-adenosine threonylcarbamoyltransferase of Borreliella burgdorferi (strain ZS7) (Borrelia burgdorferi).